The sequence spans 300 residues: MPTELTLATRRSALALAQSRAFARSLEAAVPDLSLRELEVVTSGDKTQDRSLQDIGGKGLFIKELEEALLDRRADFAVHSIKDVPAEIAPALCLACIPAREDPRDALVTRSGALLAELPAGARVGTSSLRRAVALREARPDLVIEPVRGNVDTRLRKVFDGVFDAVVLALAGLKRLGLEARATEVLSPEVSLPAIGQGALGIECRTADDSVRDVLGTLADAETTICVSAERAVMAAVEGSCRTPVAAYAVRDGGALWLRALLAEPDGSRLRRAERRLSWPGNTREAERLGADLGAELKKG.

Cys-241 bears the S-(dipyrrolylmethanemethyl)cysteine mark.

This sequence belongs to the HMBS family. Monomer. The cofactor is dipyrromethane.

The catalysed reaction is 4 porphobilinogen + H2O = hydroxymethylbilane + 4 NH4(+). The protein operates within porphyrin-containing compound metabolism; protoporphyrin-IX biosynthesis; coproporphyrinogen-III from 5-aminolevulinate: step 2/4. Functionally, tetrapolymerization of the monopyrrole PBG into the hydroxymethylbilane pre-uroporphyrinogen in several discrete steps. In Sorangium cellulosum (strain So ce56) (Polyangium cellulosum (strain So ce56)), this protein is Porphobilinogen deaminase.